The primary structure comprises 282 residues: D-alanine aminotransferase (282 aa).

Tyr-32 is a substrate binding site. Arg-51 provides a ligand contact to pyridoxal 5'-phosphate. Substrate-binding residues include Arg-99 and His-101. Catalysis depends on Lys-146, which acts as the Proton acceptor. Lys-146 is modified (N6-(pyridoxal phosphate)lysine). Residue Glu-178 coordinates pyridoxal 5'-phosphate.

This sequence belongs to the class-IV pyridoxal-phosphate-dependent aminotransferase family. In terms of assembly, homodimer. Pyridoxal 5'-phosphate serves as cofactor.

It carries out the reaction D-alanine + 2-oxoglutarate = D-glutamate + pyruvate. In terms of biological role, acts on the D-isomers of alanine, leucine, aspartate, glutamate, aminobutyrate, norvaline and asparagine. The enzyme transfers an amino group from a substrate D-amino acid to the pyridoxal phosphate cofactor to form pyridoxamine and an alpha-keto acid in the first half-reaction. The second half-reaction is the reverse of the first, transferring the amino group from the pyridoxamine to a second alpha-keto acid to form the product D-amino acid via a ping-pong mechanism. This is an important process in the formation of D-alanine and D-glutamate, which are essential bacterial cell wall components. In Staphylococcus aureus (strain MW2), this protein is D-alanine aminotransferase (dat).